The following is a 272-amino-acid chain: Elongation factor Ts (272 aa).

Residues 76–79 form an involved in Mg(2+) ion dislocation from EF-Tu region; the sequence is TDFV.

This sequence belongs to the EF-Ts family.

It localises to the cytoplasm. Associates with the EF-Tu.GDP complex and induces the exchange of GDP to GTP. It remains bound to the aminoacyl-tRNA.EF-Tu.GTP complex up to the GTP hydrolysis stage on the ribosome. This Corynebacterium urealyticum (strain ATCC 43042 / DSM 7109) protein is Elongation factor Ts.